A 188-amino-acid polypeptide reads, in one-letter code: dCTP deaminase (188 aa).

Residues 111 to 116, 135 to 137, Gln-156, Tyr-170, and Gln-180 each bind dCTP; these read KSTYAR and TLE. Glu-137 (proton donor/acceptor) is an active-site residue.

The protein belongs to the dCTP deaminase family. Homotrimer.

It carries out the reaction dCTP + H2O + H(+) = dUTP + NH4(+). It functions in the pathway pyrimidine metabolism; dUMP biosynthesis; dUMP from dCTP (dUTP route): step 1/2. Functionally, catalyzes the deamination of dCTP to dUTP. The polypeptide is dCTP deaminase (Thiobacillus denitrificans (strain ATCC 25259 / T1)).